The sequence spans 433 residues: Tol-Pal system protein TolB (433 aa).

Residues 1-26 (MNKLRLFRSFFAFLLPFGMATGAAHG) form the signal peptide.

Belongs to the TolB family. The Tol-Pal system is composed of five core proteins: the inner membrane proteins TolA, TolQ and TolR, the periplasmic protein TolB and the outer membrane protein Pal. They form a network linking the inner and outer membranes and the peptidoglycan layer.

The protein resides in the periplasm. In terms of biological role, part of the Tol-Pal system, which plays a role in outer membrane invagination during cell division and is important for maintaining outer membrane integrity. The sequence is that of Tol-Pal system protein TolB from Methylobacillus flagellatus (strain ATCC 51484 / DSM 6875 / VKM B-1610 / KT).